We begin with the raw amino-acid sequence, 459 residues long: Alcohol acyl transferase 1 allele GSa (459 aa).

Residues H164 and N385 each act as proton acceptor in the active site.

Belongs to the plant acyltransferase family. Highly expressed in the cortex and skin of ripe fruit.

It carries out the reaction butan-1-ol + acetyl-CoA = butyl acetate + CoA. The catalysed reaction is butan-1-ol + butanoyl-CoA = butyl butanoate + CoA. It catalyses the reaction butan-1-ol + hexanoyl-CoA = butyl hexanoate + CoA. The enzyme catalyses hexan-1-ol + butanoyl-CoA = hexyl butanoate + CoA. It carries out the reaction hexan-1-ol + acetyl-CoA = hexyl acetate + CoA. The catalysed reaction is 2-methylbutan-1-ol + butanoyl-CoA = 2-methylbutyl butanoate + CoA. It catalyses the reaction ethanol + butanoyl-CoA = ethyl butanoate + CoA. The enzyme catalyses hexanoyl-CoA + ethanol = ethyl hexanoate + CoA. Functionally, involved in the biosynthesis of volatile esters which confer ripe apple fruit flavor. Alcohol acyl transferase that can use a wide range of alcohols as substrate, including 2-methylbutanol, hexanol and ethanol, to produce esters such as butyl butanoate, butyl hexanoate, hexyl butanoate, ethyl butanoate and ethyl hexanoate and, to some extent, 2-methylbutyl acetate (2MBA), butyl acetate, hexyl acetate and 2-methylbutyl butanoate (2MBB). The polypeptide is Alcohol acyl transferase 1 allele GSa (Malus domestica (Apple)).